A 233-amino-acid polypeptide reads, in one-letter code: tRNA (guanine-N(7)-)-methyltransferase (233 aa).

Residues Glu62, Glu87, Asp116, and Asp138 each coordinate S-adenosyl-L-methionine. Residue Asp138 is part of the active site. Residues Lys142, Asp174, and 212-215 (TRYE) each bind substrate.

The protein belongs to the class I-like SAM-binding methyltransferase superfamily. TrmB family.

It catalyses the reaction guanosine(46) in tRNA + S-adenosyl-L-methionine = N(7)-methylguanosine(46) in tRNA + S-adenosyl-L-homocysteine. It participates in tRNA modification; N(7)-methylguanine-tRNA biosynthesis. Catalyzes the formation of N(7)-methylguanine at position 46 (m7G46) in tRNA. The polypeptide is tRNA (guanine-N(7)-)-methyltransferase (Bartonella henselae (strain ATCC 49882 / DSM 28221 / CCUG 30454 / Houston 1) (Rochalimaea henselae)).